A 20-amino-acid chain; its full sequence is Alpha-1B-glycoprotein (20 aa).

Residues 1–20 are disordered; the sequence is AVVFDPQPALWAEADTQLEP.

As to quaternary structure, interacts with CRISP3. Glycosylated. Plasma.

The protein localises to the secreted. The sequence is that of Alpha-1B-glycoprotein (A1BG) from Equus asinus (Donkey).